A 226-amino-acid polypeptide reads, in one-letter code: Leucyl/phenylalanyl-tRNA--protein transferase (226 aa).

It belongs to the L/F-transferase family.

Its subcellular location is the cytoplasm. It carries out the reaction N-terminal L-lysyl-[protein] + L-leucyl-tRNA(Leu) = N-terminal L-leucyl-L-lysyl-[protein] + tRNA(Leu) + H(+). The enzyme catalyses N-terminal L-arginyl-[protein] + L-leucyl-tRNA(Leu) = N-terminal L-leucyl-L-arginyl-[protein] + tRNA(Leu) + H(+). The catalysed reaction is L-phenylalanyl-tRNA(Phe) + an N-terminal L-alpha-aminoacyl-[protein] = an N-terminal L-phenylalanyl-L-alpha-aminoacyl-[protein] + tRNA(Phe). Functionally, functions in the N-end rule pathway of protein degradation where it conjugates Leu, Phe and, less efficiently, Met from aminoacyl-tRNAs to the N-termini of proteins containing an N-terminal arginine or lysine. The chain is Leucyl/phenylalanyl-tRNA--protein transferase from Pseudomonas fluorescens (strain Pf0-1).